The sequence spans 1013 residues: RNA-binding protein 44 (1013 aa).

Disordered regions lie at residues 1-25 (MQATAALETDSDKNYPKNGGHFQND) and 56-94 (LATEERASDKENSIVDQRDLSELSFSENQDSNRGNIFSQ). The span at 56-76 (LATEERASDKENSIVDQRDLS) shows a compositional bias: basic and acidic residues. Polar residues predominate over residues 78–94 (LSFSENQDSNRGNIFSQ). Residues Ser-365, Ser-368, Ser-510, Ser-681, and Ser-688 each carry the phosphoserine modification. The RRM domain occupies 792–865 (FLIHVGGLCP…KSVTVRLVKI (74 aa)). The disordered stretch occupies residues 905–925 (RAKSRQLESEQDSEFPPLDQG).

In terms of assembly, homodimer. Interacts with TEX14. As to expression, highly expressed in testis. Also expressed in other tissues at lower level.

It is found in the cytoplasm. Its function is as follows. Component of intercellular bridges during meiosis. Intercellular bridges are evolutionarily conserved structures that connect differentiating germ cells. Not required for fertility. The protein is RNA-binding protein 44 (Rbm44) of Mus musculus (Mouse).